Here is a 285-residue protein sequence, read N- to C-terminus: Nucleotide-binding protein Geob_2284 (285 aa).

8-15 (GLSGSGKS) is a binding site for ATP. Residue 59 to 62 (DIRG) participates in GTP binding.

This sequence belongs to the RapZ-like family.

Functionally, displays ATPase and GTPase activities. The polypeptide is Nucleotide-binding protein Geob_2284 (Geotalea daltonii (strain DSM 22248 / JCM 15807 / FRC-32) (Geobacter daltonii)).